We begin with the raw amino-acid sequence, 153 residues long: Lipoprotein signal peptidase (153 aa).

3 helical membrane-spanning segments follow: residues 11–31 (ILILTIAGIFIIDQNIKSLFV), 39–59 (DCIDLILVYNKGVAFSMFAFL), and 68–88 (LVLVFGVFGYMLYLNQLCYAI). Residues aspartate 112 and aspartate 129 contribute to the active site. Residues 122–142 (FAVFNFADVMIDVAVVWILLL) traverse the membrane as a helical segment.

Belongs to the peptidase A8 family.

The protein localises to the cell inner membrane. The enzyme catalyses Release of signal peptides from bacterial membrane prolipoproteins. Hydrolyzes -Xaa-Yaa-Zaa-|-(S,diacylglyceryl)Cys-, in which Xaa is hydrophobic (preferably Leu), and Yaa (Ala or Ser) and Zaa (Gly or Ala) have small, neutral side chains.. Its pathway is protein modification; lipoprotein biosynthesis (signal peptide cleavage). This protein specifically catalyzes the removal of signal peptides from prolipoproteins. This is Lipoprotein signal peptidase from Sulfurimonas denitrificans (strain ATCC 33889 / DSM 1251) (Thiomicrospira denitrificans (strain ATCC 33889 / DSM 1251)).